The sequence spans 403 residues: Probable protein phosphatase 2C 8 (403 aa).

Residues 42–80 (LGRTASAVAEDDAAKRVRPASDSSSDSSESAKVAPEPTA) are disordered. The segment covering 62 to 71 (SDSSSDSSES) has biased composition (low complexity). The PPM-type phosphatase domain occupies 90–388 (SHGAVSVIGR…DNISVVVVEL (299 aa)). Residues D144, G145, D325, and D379 each coordinate Mn(2+).

Belongs to the PP2C family. Mg(2+) is required as a cofactor. Mn(2+) serves as cofactor.

The catalysed reaction is O-phospho-L-seryl-[protein] + H2O = L-seryl-[protein] + phosphate. The enzyme catalyses O-phospho-L-threonyl-[protein] + H2O = L-threonyl-[protein] + phosphate. The sequence is that of Probable protein phosphatase 2C 8 from Oryza sativa subsp. japonica (Rice).